The chain runs to 396 residues: 1-deoxy-D-xylulose 5-phosphate reductoisomerase (396 aa).

Residues Thr-10, Gly-11, Ser-12, Ile-13, Gly-36, Lys-37, Asn-38, and Asn-124 each contribute to the NADPH site. Lys-125 is a binding site for 1-deoxy-D-xylulose 5-phosphate. Glu-126 is a binding site for NADPH. Asp-150 lines the Mn(2+) pocket. 1-deoxy-D-xylulose 5-phosphate contacts are provided by Ser-151, Glu-152, Ser-186, and His-209. Glu-152 is a Mn(2+) binding site. Gly-215 contacts NADPH. The 1-deoxy-D-xylulose 5-phosphate site is built by Ser-222, Asn-227, Lys-228, and Glu-231. Glu-231 contributes to the Mn(2+) binding site.

Belongs to the DXR family. It depends on Mg(2+) as a cofactor. Mn(2+) serves as cofactor.

It carries out the reaction 2-C-methyl-D-erythritol 4-phosphate + NADP(+) = 1-deoxy-D-xylulose 5-phosphate + NADPH + H(+). Its pathway is isoprenoid biosynthesis; isopentenyl diphosphate biosynthesis via DXP pathway; isopentenyl diphosphate from 1-deoxy-D-xylulose 5-phosphate: step 1/6. In terms of biological role, catalyzes the NADPH-dependent rearrangement and reduction of 1-deoxy-D-xylulose-5-phosphate (DXP) to 2-C-methyl-D-erythritol 4-phosphate (MEP). The sequence is that of 1-deoxy-D-xylulose 5-phosphate reductoisomerase from Actinobacillus pleuropneumoniae serotype 3 (strain JL03).